The sequence spans 311 residues: Homeobox-leucine zipper protein ATHB-6 (311 aa).

Polar residues predominate over residues 1–10 (MMKRLSSSDS). A disordered region spans residues 1 to 32 (MMKRLSSSDSVGGLISLCPTTSTDEQSPRRYG). The segment at 1-43 (MMKRLSSSDSVGGLISLCPTTSTDEQSPRRYGGREFQSMLEGY) is interaction with ABI1. Residues 59–118 (LSEKKRRLSINQVKALEKNFELENKLEPERKVKLAQELGLQPRQVAVWFQNRRARWKTKQ) constitute a DNA-binding region (homeobox). The leucine-zipper stretch occupies residues 119-154 (LEKDYGVLKTQYDSLRHNFDSLRRDNESLLQEISKL). Positions 157 to 183 (KLNGGGGEEEEEENNAAVTTESDISVK) are disordered. The interval 218 to 311 (LRDLLPLKAA…HWYSTVDHWN (94 aa)) is interaction with ABI1.

Belongs to the HD-ZIP homeobox family. Class I subfamily. As to quaternary structure, interacts with ABI1. Post-translationally, phosphorylated by PKA. Reversible inactivation of the binding to DNA by phosphorylation. As to expression, widely expressed.

The protein resides in the nucleus. Functionally, transcription activator that may act as growth regulators in response to water deficit. Interacts with the core sequence 5'-CAATTATTA-3' of promoters in response to ABA and in an ABI1-dependent manner. Involved in the negative regulation of the ABA signaling pathway. The protein is Homeobox-leucine zipper protein ATHB-6 (ATHB-6) of Arabidopsis thaliana (Mouse-ear cress).